A 164-amino-acid chain; its full sequence is C-phycoerythrin class 1 subunit alpha (164 aa).

(2R,3E)-phycoerythrobilin contacts are provided by C82 and C139.

It belongs to the phycobiliprotein family. Heterodimer of an alpha and a beta chain. Contains two covalently linked phycoerythrobilin chromophores.

The protein resides in the cellular thylakoid membrane. In terms of biological role, light-harvesting photosynthetic bile pigment-protein from the phycobiliprotein complex. The chain is C-phycoerythrin class 1 subunit alpha (cpeA) from Synechococcus sp. (strain WH8020).